The sequence spans 281 residues: Predicted GPI-anchored protein 39 (281 aa).

The N-terminal stretch at 1–18 (MKATTFTLLLSIATAINA) is a signal peptide. Disordered stretches follow at residues 52–94 (HHHG…SASV) and 106–227 (VSVS…SSSE). Composition is skewed to low complexity over residues 69–94 (SSSS…SASV), 106–158 (VSVS…STTD), 167–203 (ATDS…IEET), and 210–227 (SVPS…SSSE). Asparagine 150 carries an N-linked (GlcNAc...) asparagine glycan. Residues asparagine 239, asparagine 246, asparagine 249, and asparagine 252 are each glycosylated (N-linked (GlcNAc...) asparagine). Serine 256 carries GPI-anchor amidated serine lipidation. Positions 257 to 281 (ANFAIQYGTDYGVAVVAAIVGALLI) are cleaved as a propeptide — removed in mature form.

The protein localises to the cell membrane. The chain is Predicted GPI-anchored protein 39 (PGA39) from Candida albicans (strain SC5314 / ATCC MYA-2876) (Yeast).